Here is a 125-residue protein sequence, read N- to C-terminus: Large ribosomal subunit protein eL31 (125 aa).

This sequence belongs to the eukaryotic ribosomal protein eL31 family. In terms of assembly, component of the large ribosomal subunit.

Its subcellular location is the cytoplasm. Component of the large ribosomal subunit. The ribosome is a large ribonucleoprotein complex responsible for the synthesis of proteins in the cell. This Ictalurus punctatus (Channel catfish) protein is Large ribosomal subunit protein eL31 (rpl31).